Reading from the N-terminus, the 336-residue chain is Isethionate-binding periplasmic protein DctP (336 aa).

The N-terminal stretch at 1 to 23 (MKHLLKAGALVALACIVTLTAGA) is a signal peptide.

The protein belongs to the bacterial solute-binding protein 7 family. In terms of assembly, the complex comprises the periplasmic solute receptor protein DctP, and the fused transmembrane protein DctMQ.

The protein localises to the periplasm. The catalysed reaction is 2-hydroxyethane-1-sulfonate(out) + Na(+)(out) = 2-hydroxyethane-1-sulfonate(in) + Na(+)(in). Its pathway is organosulfur degradation; alkanesulfonate degradation. Functionally, part of the tripartite ATP-independent periplasmic (TRAP) transport system DctPQM involved in the uptake of isethionate (2-hydroxyethanesulfonate), which is then catabolized by enzymes encoded by adjacent genes in the locus. The DctP subunit is the solute-binding protein. Thereby is involved in an anaerobic respiration pathway that converts the sulfonate isethionate to ammonia, acetate and sulfide. The polypeptide is Isethionate-binding periplasmic protein DctP (Oleidesulfovibrio alaskensis (strain ATCC BAA-1058 / DSM 17464 / G20) (Desulfovibrio alaskensis)).